The following is a 304-amino-acid chain: tRNA (guanine(9)-N1)-methyltransferase (304 aa).

Composition is skewed to basic and acidic residues over residues 1–26 and 42–72; these read MENK…KNET and RQQE…KRKI. A disordered region spans residues 1–72; sequence MENKDALDIG…LRKEERKRKI (72 aa). An SAM-dependent MTase TRM10-type domain is found at 81-276; that stretch reads QKKRIRLGKV…EVIPKRKGIL (196 aa). S-adenosyl-L-methionine is bound by residues L183, G203, 207 to 211, C215, L229, and 241 to 243; these read DKNRY and KIL. D207 serves as the catalytic Proton acceptor. Positions 282 to 304 are disordered; it reads SFDVSEDTRSQSNQSDSELEKEN. S296 is modified (phosphoserine).

It belongs to the class IV-like SAM-binding methyltransferase superfamily. TRM10 family. In terms of assembly, monomer.

The protein resides in the cytoplasm. It localises to the nucleus. It carries out the reaction guanosine(9) in tRNA + S-adenosyl-L-methionine = N(1)-methylguanosine(9) in tRNA + S-adenosyl-L-homocysteine + H(+). S-adenosyl-L-methionine-dependent guanine N(1)-methyltransferase that catalyzes the formation of N(1)-methylguanine at position 9 (m1G9) in cytoplasmic tRNA. The sequence is that of tRNA (guanine(9)-N1)-methyltransferase from Schizosaccharomyces pombe (strain 972 / ATCC 24843) (Fission yeast).